Reading from the N-terminus, the 274-residue chain is Penicillin-insensitive murein endopeptidase (274 aa).

Positions 1 to 19 (MNKTAIALLALLASSASLA) are cleaved as a signal peptide. 3 disulfides stabilise this stretch: C44-C265, C187-C235, and C216-C223. Zn(2+) contacts are provided by H110, H113, D120, D147, H150, and H211. The segment at 227-274 (PLPPPGDGCGAELQSWFEPPKPGTTKPEKKTPPPLPPSCQALLDEHVI) is disordered.

It belongs to the peptidase M74 family. Dimer. Requires Zn(2+) as cofactor.

It is found in the periplasm. Murein endopeptidase that cleaves the D-alanyl-meso-2,6-diamino-pimelyl amide bond that connects peptidoglycan strands. Likely plays a role in the removal of murein from the sacculus. This Escherichia coli (strain SE11) protein is Penicillin-insensitive murein endopeptidase.